The sequence spans 471 residues: Isochorismate synthase MenF (471 aa).

Residue K226 is the Proton acceptor of the active site. E275 functions as the Proton donor in the catalytic mechanism. Positions 319 and 454 each coordinate Mg(2+).

It belongs to the isochorismate synthase family. Mg(2+) is required as a cofactor.

The catalysed reaction is chorismate = isochorismate. Its pathway is quinol/quinone metabolism; 1,4-dihydroxy-2-naphthoate biosynthesis; 1,4-dihydroxy-2-naphthoate from chorismate: step 1/7. The protein operates within quinol/quinone metabolism; menaquinone biosynthesis. Catalyzes the conversion of chorismate to isochorismate. This Bacillus subtilis (strain 168) protein is Isochorismate synthase MenF.